Reading from the N-terminus, the 417-residue chain is Solute carrier family 25 member 46-A (417 aa).

Residues Met1–Glu13 show a composition bias toward basic and acidic residues. A disordered region spans residues Met1 to Ala90. Residues Ser31–Ser41 are compositionally biased toward low complexity. A Solcar 1 repeat occupies Gln95 to Pro186. The next 6 helical transmembrane spans lie at Phe102–Leu122, Met162–Phe182, Ile198–Ala218, Leu257–Val277, Phe313–Leu333, and Leu382–Leu402. Residues Glu310–Thr415 form a Solcar 2 repeat.

It belongs to the mitochondrial carrier (TC 2.A.29) family.

It is found in the mitochondrion outer membrane. May play a role in mitochondrial dynamics by controlling mitochondrial membrane fission. The polypeptide is Solute carrier family 25 member 46-A (slc25a46-a) (Xenopus laevis (African clawed frog)).